We begin with the raw amino-acid sequence, 147 residues long: Large ribosomal subunit protein bL9 (147 aa).

Belongs to the bacterial ribosomal protein bL9 family.

Binds to the 23S rRNA. This is Large ribosomal subunit protein bL9 from Campylobacter jejuni subsp. jejuni serotype O:2 (strain ATCC 700819 / NCTC 11168).